Consider the following 258-residue polypeptide: Small ribosomal subunit protein uS3 (258 aa).

One can recognise a KH type-2 domain in the interval 43-111; the sequence is IRKLMSTGLE…QVQLNILEVK (69 aa). The segment at 217 to 258 is disordered; sequence AREQASAAPRARGRADRPRGRRDEGAAPQQAAAPAATTGTEA. The segment covering 229–241 has biased composition (basic and acidic residues); that stretch reads GRADRPRGRRDEG. Low complexity predominate over residues 242–258; the sequence is AAPQQAAAPAATTGTEA.

Belongs to the universal ribosomal protein uS3 family. As to quaternary structure, part of the 30S ribosomal subunit. Forms a tight complex with proteins S10 and S14.

Binds the lower part of the 30S subunit head. Binds mRNA in the 70S ribosome, positioning it for translation. This Beutenbergia cavernae (strain ATCC BAA-8 / DSM 12333 / CCUG 43141 / JCM 11478 / NBRC 16432 / NCIMB 13614 / HKI 0122) protein is Small ribosomal subunit protein uS3.